Reading from the N-terminus, the 669-residue chain is Galactocerebrosidase (669 aa).

The signal sequence occupies residues 1 to 26 (MTAAAGSAGHAAVPLLLCALLVPGGA). Substrate is bound by residues T93, W135, and N181. Catalysis depends on E182, which acts as the Proton donor/acceptor. Residue E258 is the Nucleophile of the active site. C271 and C378 are disulfide-bonded. N363 is a glycosylation site (N-linked (GlcNAc...) asparagine). Substrate is bound at residue R380. N-linked (GlcNAc...) asparagine glycosylation is found at N387, N543, and N586.

This sequence belongs to the glycosyl hydrolase 59 family.

It localises to the lysosome. It catalyses the reaction a beta-D-galactosyl-(1&lt;-&gt;1')-N-acylsphing-4-enine + H2O = an N-acylsphing-4-enine + D-galactose. It carries out the reaction beta-D-galactosyl-(1&lt;-&gt;1)-sphing-4-enine + H2O = sphing-4-enine + D-galactose. The enzyme catalyses a D-galactosylceramide + H2O = an N-acyl-sphingoid base + D-galactose. In terms of biological role, hydrolyzes the galactose ester bonds of glycolipids such as galactosylceramide and galactosylsphingosine. Enzyme with very low activity responsible for the lysosomal catabolism of galactosylceramide, a major lipid in myelin, kidney and epithelial cells of small intestine and colon. The protein is Galactocerebrosidase of Canis lupus familiaris (Dog).